We begin with the raw amino-acid sequence, 328 residues long: Transcriptional regulator protein Pur-beta-B (328 aa).

Disordered stretches follow at residues 1–35, 100–124, and 289–328; these read MADG…ELAS, SPEQ…RALK, and QERQ…VDDD. Ala2 is subject to N-acetylalanine. Gly residues predominate over residues 9–18; it reads ERGGSSGGPS. Residues 24-35 show a composition bias toward basic and acidic residues; that stretch reads MSREQETQELAS. A DNA-binding region spans residues 27 to 260; it reads EQETQELASK…LRVSEVKPSY (234 aa). Residues 289–303 show a composition bias toward basic and acidic residues; sequence QERQRDKMYDRRGPG. Residues 304–317 show a composition bias toward gly residues; it reads ERGGSLGPGAGGGG. Positions 318–328 are enriched in acidic residues; sequence DDSETEDVDDD.

Belongs to the PUR DNA-binding protein family.

The protein localises to the nucleus. Functionally, transcriptional regulator which can act as an activator or a repressor. The chain is Transcriptional regulator protein Pur-beta-B (purb-b) from Xenopus laevis (African clawed frog).